Here is a 344-residue protein sequence, read N- to C-terminus: MVCARHQPGGLCLLLLLLCQFMEDRSAQAGNCWLRQAKNGRCQVLYKTELSKEECCSTGRLSTSWTEEDVNDNTLFKWMIFNGGAPNCIPCKETCENVDCGPGKKCRMNKKNKPRCVCAPDCSNITWKGPVCGLDGKTYRNECALLKARCKEQPELEVQYQGKCKKTCRDVFCPGSSTCVVDQTNNAYCVTCNRICPEPSSSEQYLCGNDGVTYSSACHLRKATCLLGRSIGLAYEGKCIKAKSCEDIQCGGGKKCLWDSKVGRGRCSLCDELCPDSKSDEPVCASDNATYASECAMKEAACSSGVLLEVKHSGSCNSISEETEEEEEEEDQDYSFPISSILEW.

The N-terminal stretch at 1-29 (MVCARHQPGGLCLLLLLLCQFMEDRSAQA) is a signal peptide. The 74-residue stretch at 30–103 (GNCWLRQAKN…TCENVDCGPG (74 aa)) folds into the TB domain. 18 cysteine pairs are disulfide-bonded: C32–C55, C42–C88, C56–C91, C95–C106, C100–C116, C118–C150, C122–C143, C132–C164, C168–C179, C173–C189, C192–C225, C196–C218, C207–C239, C245–C256, C250–C267, C270–C302, C274–C295, and C284–C316. Positions 94 to 117 (TCENVDCGPGKKCRMNKKNKPRCV) constitute a Follistatin-like 1 domain. The 55-residue stretch at 112–166 (NKPRCVCAPDCSNITWKGPVCGLDGKTYRNECALLKARCKEQPELEVQYQGKCKK) folds into the Kazal-like 1 domain. A glycan (N-linked (GlcNAc...) asparagine) is linked at N124. Residues 167–190 (TCRDVFCPGSSTCVVDQTNNAYCV) form the Follistatin-like 2 domain. The region spanning 186 to 241 (NAYCVTCNRICPEPSSSEQYLCGNDGVTYSSACHLRKATCLLGRSIGLAYEGKCIK) is the Kazal-like 2 domain. The Follistatin-like 3 domain maps to 244–268 (SCEDIQCGGGKKCLWDSKVGRGRCS). Positions 264–318 (RGRCSLCDELCPDSKSDEPVCASDNATYASECAMKEAACSSGVLLEVKHSGSCNS) constitute a Kazal-like 3 domain. Residue N288 is glycosylated (N-linked (GlcNAc...) asparagine). The tract at residues 315–344 (SCNSISEETEEEEEEEDQDYSFPISSILEW) is disordered. A compositionally biased stretch (acidic residues) spans 321-333 (EETEEEEEEEDQD).

As to quaternary structure, interacts with GDF11. Interacts with activin A/INHBA. Interacts with myostatin/MSTN.

It localises to the secreted. It is found in the nucleus. Its subcellular location is the nucleolus. In terms of biological role, multifunctional regulatory protein whose primary function is to antagonize members of the transforming growth factor beta (TGF-beta) superfamily including activin, myostatin, GDF11 or bone morphogenetic proteins (BMPs). Mechanistically, binds to these ligands in the extracellular space, blocking their type II receptor-binding site to inhibit downstream signaling. Plays an essential role in muscle fiber formation and growth both by preventing the repressive effects of myostatin and through SMAD3/AKT/mTOR signaling independently of myostatin. Also promotes neural differentiation by antagonizing the action BMP4. Acts as a specific inhibitor of the biosynthesis and secretion of pituitary follicle stimulating hormone (FSH) by sequestering activin A/INHBA. On the other hand, translocates into the nucleus where it down-regulates rRNA synthesis and ribosome biogenesis to maintain cellular energy homeostasis by binding to rDNA. This is Follistatin from Mus musculus (Mouse).